We begin with the raw amino-acid sequence, 336 residues long: Potassium channel subfamily K member 1 (336 aa).

The Cytoplasmic segment spans residues M1 to A20. The chain crosses the membrane as a helical span at residues W21–F41. Topologically, residues S42 to D103 are extracellular. An N-linked (GlcNAc...) asparagine glycan is attached at N95. The segment at residues F104–S116 is an intramembrane region (helical). The stretch at T117 to H122 is an intramembrane region. The segment at T117–H122 is selectivity filter 1. The Extracellular portion of the chain corresponds to T123–A132. A helical membrane pass occupies residues F133–V156. Topologically, residues T157–I181 are cytoplasmic. Residues V182–V202 traverse the membrane as a helical segment. The Extracellular portion of the chain corresponds to F203–N211. The helical intramembrane region spans F212–S224. Residues T225–D230 form a selectivity filter 2 region. An intramembrane segment occupies T225–Y231. The Extracellular segment spans residues V232–E243. The helical transmembrane segment at L244 to F267 threads the bilayer. The Cytoplasmic portion of the chain corresponds to C268–H336. K274 participates in a covalent cross-link: Glycyl lysine isopeptide (Lys-Gly) (interchain with G-Cter in SUMO). Residues I293–L299 form an important for intracellular retention in recycling endosomes region. The interval G310–H336 is disordered. Residue S326 is modified to Phosphoserine.

The protein belongs to the two pore domain potassium channel (TC 1.A.1.8) family. As to quaternary structure, homodimer; disulfide-linked. Heterodimer with KCNK2; disulfide-linked. In astrocytes, forms mostly heterodimeric potassium channels with KCNK2, with only a minor proportion of functional channels containing homodimeric KCNK1. Interacts with KCNK3 and KCNK9, forming functional heterodimeric channels. Interacts with GNG4. Identified in a complex with PSD and ARF6; interacts only with PSD that is bound to ARF6. Interacts with UBE2I. Post-translationally, sumoylation is controversial. Sumoylated by UBE2I. Not sumoylated when expressed in xenopus oocytes or mammalian cells. Sumoylation inactivates the channel, but does not interfere with expression at the cell membrane. Sumoylation of a single subunit is sufficient to silence the dimeric channel. Sumoylation of KCNK1 is sufficient to silence heterodimeric channels formed by KCNK1 and KCNK3 or KCNK9. Desumoylated by SENP1; this activates the channel. Desumoylated by SENP1; this strongly increases halothane-mediated activation of heterodimeric channels formed with KCNK9. SENP1 treatment has no effect. In terms of tissue distribution, detected in brain and in kidney cortex and medulla, especially at the renal brush border membranes of the proximal convoluted tubules, in distal tubules and on intercalated cells of the collecting duct. Detected in cerebellum granule neurons. Detected in astrocytes in hippocampus stratum radiatum. Highly expressed in the stria vascularis in the cochlea. Detected in neurons in Scarpa's ganglion in the inner ear, at nerve terminals in the crista ampullaris, in supporting cells and dark cells, but not in hair cells (at protein level). Detected in the brain cerebellar granule cell layer, amygdala, thalamus reticular nucleus, habenula, mesencephalic trigeminal neurons, neocortex and piriform cortex, and at lower levels in the olfactory bulb. Detected in Scarpa's ganglia and crista ampullaris in the inner ear.

The protein localises to the cell membrane. The protein resides in the recycling endosome. It localises to the apical cell membrane. It is found in the cytoplasmic vesicle. Its subcellular location is the perikaryon. The protein localises to the cell projection. The protein resides in the dendrite. It localises to the synaptic cell membrane. It catalyses the reaction K(+)(in) = K(+)(out). The enzyme catalyses NH4(+)(in) = NH4(+)(out). It carries out the reaction Na(+)(in) = Na(+)(out). The catalysed reaction is Rb(+)(in) = Rb(+)(out). It catalyses the reaction Cs(+)(in) = Cs(+)(out). The enzyme catalyses Li(+)(in) = Li(+)(out). It carries out the reaction L-glutamate(out) = L-glutamate(in). The catalysed reaction is chloride(in) = chloride(out). Its activity is regulated as follows. Inhibited by 100 uM quinine. Slightly inhibited by Ba(+). Activity is first increased and then decreased when the extracellular pH is lowered to 6.0. Its function is as follows. Ion channel that contributes to passive transmembrane potassium transport and to the regulation of the resting membrane potential in brain astrocytes, but also in kidney and in other tissues. Forms dimeric channels through which potassium ions pass in accordance with their electrochemical gradient. The channel is selective for K(+) ions at physiological potassium concentrations and at neutral pH, but becomes permeable to Na(+) at subphysiological K(+) levels and upon acidification of the extracellular medium. The homodimer has very low potassium channel activity, when expressed in heterologous systems, and can function as weakly inward rectifying potassium channel. Channel activity is modulated by activation of serotonin receptors. Heterodimeric channels containing KCNK1 and KCNK2 have much higher activity, and may represent the predominant form in astrocytes. Heterodimeric channels containing KCNK1 and KCNK3 or KCNK9 have much higher activity. Heterodimeric channels formed by KCNK1 and KCNK9 may contribute to halothane-sensitive currents. Mediates outward rectifying potassium currents in dentate gyrus granule cells and contributes to the regulation of their resting membrane potential. Contributes to the regulation of action potential firing in dentate gyrus granule cells and down-regulates their intrinsic excitability. Contributes to the regulation of the resting membrane potential of pancreatic beta cells. In astrocytes, the heterodimer formed by KCNK1 and KCNK2 is required for rapid glutamate release in response to activation of G-protein coupled receptors, such as F2R and CNR1. Required for normal ion and water transport in the kidney. The low channel activity of homodimeric KCNK1 may be due to sumoylation. The low channel activity may be due to rapid internalization from the cell membrane and retention in recycling endosomes. Permeable to monovalent cations with ion selectivity for K(+) &gt; Rb(+) &gt;&gt; NH4(+) &gt;&gt; Cs(+) = Na(+) = Li(+). The chain is Potassium channel subfamily K member 1 from Rattus norvegicus (Rat).